The chain runs to 762 residues: Putative BTB/POZ domain-containing protein L272 (762 aa).

The BTB domain maps to 16-86 (TDITIILKDE…FYGQKIKSHN (71 aa)). Acidic residues predominate over residues 390 to 410 (DLDNSNDLNDSNDLDDSDDSN). Disordered regions lie at residues 390–411 (DLDNSNDLNDSNDLDDSDDSND) and 532–556 (ISDNSDNLNNSDNSDDLDNPDNSDN). The segment covering 532 to 543 (ISDNSDNLNNSD) has biased composition (low complexity). Positions 737–762 (FSENYCDELINRLNNALKKIEQKYPN) form a coiled coil.

The protein belongs to the mimivirus BTB/WD family.

The protein is Putative BTB/POZ domain-containing protein L272 of Acanthamoeba polyphaga (Amoeba).